Reading from the N-terminus, the 312-residue chain is Probable phytanoyl-CoA dioxygenase (312 aa).

Residues lysine 84, methionine 124, 142–144 (HQD), and tryptophan 160 contribute to the 2-oxoglutarate site. Residues histidine 142 and aspartate 144 each contribute to the Fe cation site. Histidine 231 lines the Fe cation pocket. 2-oxoglutarate contacts are provided by serine 233 and arginine 242.

It belongs to the PhyH family. Requires Fe cation as cofactor. L-ascorbate is required as a cofactor.

It catalyses the reaction phytanoyl-CoA + 2-oxoglutarate + O2 = 2-hydroxyphytanoyl-CoA + succinate + CO2. It participates in lipid metabolism; fatty acid metabolism. Its function is as follows. Converts phytanoyl-CoA to 2-hydroxyphytanoyl-CoA. In Caenorhabditis elegans, this protein is Probable phytanoyl-CoA dioxygenase.